A 232-amino-acid polypeptide reads, in one-letter code: Dof zinc finger protein DOF4.3 (232 aa).

The Dof-type zinc finger occupies 25–79 (RVCARCDSDNTKFCYYNNYSEFQPRYFCKNCRRYWTHGGALRNVPIGGSSRAKRT). Zn(2+) contacts are provided by C27, C30, C52, and C55.

The protein localises to the nucleus. In terms of biological role, transcription factor that binds specifically to a 5'-AA[AG]G-3' consensus core sequence. This chain is Dof zinc finger protein DOF4.3 (DOF4.3), found in Arabidopsis thaliana (Mouse-ear cress).